Consider the following 176-residue polypeptide: Lipoprotein signal peptidase (176 aa).

4 helical membrane passes run 10–30 (LFQF…AIVL), 48–68 (VPVL…AFSF), 78–98 (YFFT…LLRM), and 102–122 (MVVL…NLID). Catalysis depends on residues Asp131 and Asp149. Residues 141-161 (HFPAFNIADSAITLGTILLLI) form a helical membrane-spanning segment.

It belongs to the peptidase A8 family.

The protein localises to the cell inner membrane. The catalysed reaction is Release of signal peptides from bacterial membrane prolipoproteins. Hydrolyzes -Xaa-Yaa-Zaa-|-(S,diacylglyceryl)Cys-, in which Xaa is hydrophobic (preferably Leu), and Yaa (Ala or Ser) and Zaa (Gly or Ala) have small, neutral side chains.. Its pathway is protein modification; lipoprotein biosynthesis (signal peptide cleavage). This protein specifically catalyzes the removal of signal peptides from prolipoproteins. This Acinetobacter baumannii (strain ATCC 17978 / DSM 105126 / CIP 53.77 / LMG 1025 / NCDC KC755 / 5377) protein is Lipoprotein signal peptidase.